Consider the following 143-residue polypeptide: Antiholin-like protein LrgA (143 aa).

4 helical membrane passes run 6–26 (VYSF…SNII), 30–50 (LPIP…LLCL), 61–81 (LGTA…ISVI), and 97–117 (VIVV…QFIL).

It belongs to the CidA/LrgA family. LrgA subfamily.

Its subcellular location is the cell membrane. Its function is as follows. Inhibits the expression or activity of extracellular murein hydrolases by interacting, possibly with LrgB, with the holin-like protein CidA. The LrgAB and CidA proteins may affect the proton motive force of the membrane. May be involved in programmed cell death (PCD), possibly triggering PCD in response to antibiotics and environmental stresses. The polypeptide is Antiholin-like protein LrgA (Bacillus cereus (strain AH820)).